A 166-amino-acid chain; its full sequence is Large ribosomal subunit protein uL10 (166 aa).

Belongs to the universal ribosomal protein uL10 family. As to quaternary structure, part of the ribosomal stalk of the 50S ribosomal subunit. The N-terminus interacts with L11 and the large rRNA to form the base of the stalk. The C-terminus forms an elongated spine to which L12 dimers bind in a sequential fashion forming a multimeric L10(L12)X complex.

In terms of biological role, forms part of the ribosomal stalk, playing a central role in the interaction of the ribosome with GTP-bound translation factors. The protein is Large ribosomal subunit protein uL10 of Streptococcus pneumoniae (strain ATCC 700669 / Spain 23F-1).